We begin with the raw amino-acid sequence, 253 residues long: MANLGCWMLVLFVATWSDLGLCKKRPKPGGWNTGGSRYPGQGSPGGNRYPPQGGGGWGQPHGGGWGQPHGGGWGQPHGGGWGQPHGGGWGQGGGTHSQWNKPSKPKTNMKHMAGAAAAGAVVGGLGGYMLGSAMSRPIIHFGSDYEDRYYRENMHRYPNQVYYRPMDEYSNQNNFVHDCVNITIKQHTVTTTTKGENFTETDVKMMERVVEQMCITQYERESQAYYQRGSSMVLFSSPPVILLISFLIFLIVG.

A signal peptide spans 1-22 (MANLGCWMLVLFVATWSDLGLC). The segment at 23-38 (KKRPKPGGWNTGGSRY) is interaction with ADGRG6. The interaction with GRB2, ERI3 and SYN1 stretch occupies residues 23-230 (KKRPKPGGWN…ESQAYYQRGS (208 aa)). The interval 26 to 108 (PKPGGWNTGG…WNKPSKPKTN (83 aa)) is disordered. 5 tandem repeats follow at residues 51 to 59 (PQGGGGWGQ), 60 to 67 (PHGGGWGQ), 68 to 75 (PHGGGWGQ), 76 to 83 (PHGGGWGQ), and 84 to 91 (PHGGGWGQ). The interval 51-91 (PQGGGGWGQPHGGGWGQPHGGGWGQPHGGGWGQPHGGGWGQ) is 5 X 8 AA tandem repeats of P-H-G-G-G-W-G-Q. Positions 52–95 (QGGGGWGQPHGGGWGQPHGGGWGQPHGGGWGQPHGGGWGQGGGT) are enriched in gly residues. Cu(2+) contacts are provided by His61, Gly62, Gly63, His69, Gly70, Gly71, His77, Gly78, Gly79, His85, Gly86, and Gly87. The cysteines at positions 179 and 214 are disulfide-linked. Residues Asn181 and Asn197 are each glycosylated (N-linked (GlcNAc...) asparagine). A lipid anchor (GPI-anchor amidated serine) is attached at Ser230. Positions 231-253 (SMVLFSSPPVILLISFLIFLIVG) are cleaved as a propeptide — removed in mature form.

This sequence belongs to the prion family. As to quaternary structure, monomer and homodimer. Has a tendency to aggregate into amyloid fibrils containing a cross-beta spine, formed by a steric zipper of superposed beta-strands. Soluble oligomers may represent an intermediate stage on the path to fibril formation. Copper binding may promote oligomerization. Interacts with GRB2, APP, ERI3/PRNPIP and SYN1. Mislocalized cytosolically exposed PrP interacts with MGRN1; this interaction alters MGRN1 subcellular location and causes lysosomal enlargement. Interacts with KIAA1191. Interacts with ADGRG6. The glycosylation pattern (the amount of mono-, di- and non-glycosylated forms or glycoforms) seems to differ in normal and CJD prion.

It is found in the cell membrane. The protein resides in the golgi apparatus. Functionally, its primary physiological function is unclear. May play a role in neuronal development and synaptic plasticity. May be required for neuronal myelin sheath maintenance. May promote myelin homeostasis through acting as an agonist for ADGRG6 receptor. May play a role in iron uptake and iron homeostasis. Soluble oligomers are toxic to cultured neuroblastoma cells and induce apoptosis (in vitro). Association with GPC1 (via its heparan sulfate chains) targets PRNP to lipid rafts. Also provides Cu(2+) or Zn(2+) for the ascorbate-mediated GPC1 deaminase degradation of its heparan sulfate side chains. This Homo sapiens (Human) protein is Major prion protein (PRNP).